The chain runs to 312 residues: Ribosomal RNA small subunit methyltransferase H (312 aa).

S-adenosyl-L-methionine contacts are provided by residues 33–35, D53, F80, D101, and Q108; that span reads SGH.

It belongs to the methyltransferase superfamily. RsmH family.

The protein resides in the cytoplasm. The catalysed reaction is cytidine(1402) in 16S rRNA + S-adenosyl-L-methionine = N(4)-methylcytidine(1402) in 16S rRNA + S-adenosyl-L-homocysteine + H(+). In terms of biological role, specifically methylates the N4 position of cytidine in position 1402 (C1402) of 16S rRNA. The protein is Ribosomal RNA small subunit methyltransferase H of Desulforapulum autotrophicum (strain ATCC 43914 / DSM 3382 / VKM B-1955 / HRM2) (Desulfobacterium autotrophicum).